Consider the following 290-residue polypeptide: MLTGSITAIVTPFKNGEVDYGAFERLIEFQIQNGTDGILVCGTSGESPTLSYEEHEAVIEFAVKSAKKRIHIMAGTGANSTEEALRFTTFAKAVGADSALLVVPYYNKPTQEGLYRHFSKIAKEVDIDIYIYNIPSRTGIEISVDTLERLAKDHKNIKGSKESTPNMDRISEILKRIPNFTVFSGDDSLTLPMMSLGAKGVVSVISNVMPKEIKEFTSYALKGDFEKARDMHYYLLEIFKIMFIETNPIPVKTALSLMGMVKKEFRLPLCEMLPQNEEKLKEVLKKYNLI.

Ser44 contributes to the pyruvate binding site. The Proton donor/acceptor role is filled by Tyr132. Residue Lys161 is the Schiff-base intermediate with substrate of the active site. Val202 lines the pyruvate pocket.

It belongs to the DapA family. In terms of assembly, homotetramer; dimer of dimers.

The protein resides in the cytoplasm. It catalyses the reaction L-aspartate 4-semialdehyde + pyruvate = (2S,4S)-4-hydroxy-2,3,4,5-tetrahydrodipicolinate + H2O + H(+). It functions in the pathway amino-acid biosynthesis; L-lysine biosynthesis via DAP pathway; (S)-tetrahydrodipicolinate from L-aspartate: step 3/4. Its function is as follows. Catalyzes the condensation of (S)-aspartate-beta-semialdehyde [(S)-ASA] and pyruvate to 4-hydroxy-tetrahydrodipicolinate (HTPA). This Hydrogenobaculum sp. (strain Y04AAS1) protein is 4-hydroxy-tetrahydrodipicolinate synthase.